A 120-amino-acid chain; its full sequence is Ribonuclease P protein component (120 aa).

This sequence belongs to the RnpA family. Consists of a catalytic RNA component (M1 or rnpB) and a protein subunit.

It catalyses the reaction Endonucleolytic cleavage of RNA, removing 5'-extranucleotides from tRNA precursor.. Functionally, RNaseP catalyzes the removal of the 5'-leader sequence from pre-tRNA to produce the mature 5'-terminus. It can also cleave other RNA substrates such as 4.5S RNA. The protein component plays an auxiliary but essential role in vivo by binding to the 5'-leader sequence and broadening the substrate specificity of the ribozyme. This Dehalococcoides mccartyi (strain CBDB1) protein is Ribonuclease P protein component.